Reading from the N-terminus, the 89-residue chain is Large ribosomal subunit protein uL24 (89 aa).

This sequence belongs to the universal ribosomal protein uL24 family. As to quaternary structure, part of the 50S ribosomal subunit.

Its function is as follows. One of two assembly initiator proteins, it binds directly to the 5'-end of the 23S rRNA, where it nucleates assembly of the 50S subunit. Functionally, one of the proteins that surrounds the polypeptide exit tunnel on the outside of the subunit. The chain is Large ribosomal subunit protein uL24 from Chlorobium chlorochromatii (strain CaD3).